The following is a 107-amino-acid chain: U1-lycotoxin-Ls1f (107 aa).

A signal peptide spans 1–20 (MMKVLVVVALLVTLISYSSS). The propeptide occupies 21 to 41 (EGIDDLEADELLSLMANEQTR). Disulfide bonds link Cys-44-Cys-59, Cys-51-Cys-68, Cys-58-Cys-86, and Cys-70-Cys-84.

This sequence belongs to the neurotoxin 19 (CSTX) family. 04 (U1-Lctx) subfamily. In terms of tissue distribution, expressed by the venom gland.

Its subcellular location is the secreted. The chain is U1-lycotoxin-Ls1f from Lycosa singoriensis (Wolf spider).